The following is an 87-amino-acid chain: Large ribosomal subunit protein uL23c (87 aa).

This sequence belongs to the universal ribosomal protein uL23 family. As to quaternary structure, part of the 50S ribosomal subunit.

The protein localises to the plastid. The protein resides in the chloroplast. Functionally, binds to 23S rRNA. This chain is Large ribosomal subunit protein uL23c (rpl23), found in Ostreococcus tauri.